The primary structure comprises 88 residues: Apolipoprotein C-I (88 aa).

Residues 1-26 form the signal peptide; sequence MRLFIALPVLIVVVAMALEGPAPAQA.

This sequence belongs to the apolipoprotein C1 family.

It localises to the secreted. Its function is as follows. Inhibitor of lipoprotein binding to the low density lipoprotein (LDL) receptor, LDL receptor-related protein, and very low density lipoprotein (VLDL) receptor. Associates with high density lipoproteins (HDL) and the triacylglycerol-rich lipoproteins in the plasma and makes up about 10% of the protein of the VLDL and 2% of that of HDL. Appears to interfere directly with fatty acid uptake and is also the major plasma inhibitor of cholesteryl ester transfer protein (CETP). Modulates the interaction of APOE with beta-migrating VLDL and inhibits binding of beta-VLDL to the LDL receptor-related protein. Binds free fatty acids and reduces their intracellular esterification. In Grammomys surdaster (African woodland thicket rat), this protein is Apolipoprotein C-I (Apoc1).